An 87-amino-acid polypeptide reads, in one-letter code: Translation initiation factor IF-1 1 (87 aa).

One can recognise an S1-like domain in the interval 1-72 (MAKEELLELD…TKGRINFRHK (72 aa)). A disordered region spans residues 68–87 (NFRHKDANSPRPPRTGQPRR). The span at 77-87 (PRPPRTGQPRR) shows a compositional bias: pro residues.

Belongs to the IF-1 family. In terms of assembly, component of the 30S ribosomal translation pre-initiation complex which assembles on the 30S ribosome in the order IF-2 and IF-3, IF-1 and N-formylmethionyl-tRNA(fMet); mRNA recruitment can occur at any time during PIC assembly.

It is found in the cytoplasm. Functionally, one of the essential components for the initiation of protein synthesis. Stabilizes the binding of IF-2 and IF-3 on the 30S subunit to which N-formylmethionyl-tRNA(fMet) subsequently binds. Helps modulate mRNA selection, yielding the 30S pre-initiation complex (PIC). Upon addition of the 50S ribosomal subunit IF-1, IF-2 and IF-3 are released leaving the mature 70S translation initiation complex. In Burkholderia lata (strain ATCC 17760 / DSM 23089 / LMG 22485 / NCIMB 9086 / R18194 / 383), this protein is Translation initiation factor IF-1 1.